Reading from the N-terminus, the 404-residue chain is tRNA pseudouridine synthase D (404 aa).

Catalysis depends on Asp-79, which acts as the Nucleophile. The 211-residue stretch at 154-364 (GVPNRFGEQR…MEGERRPLRV (211 aa)) folds into the TRUD domain.

Belongs to the pseudouridine synthase TruD family.

The catalysed reaction is uridine(13) in tRNA = pseudouridine(13) in tRNA. In terms of biological role, responsible for synthesis of pseudouridine from uracil-13 in transfer RNAs. The protein is tRNA pseudouridine synthase D of Geobacter metallireducens (strain ATCC 53774 / DSM 7210 / GS-15).